The following is a 579-amino-acid chain: Polyadenylate-binding protein, cytoplasmic and nuclear (579 aa).

The span at 1–10 (MADITEKTAE) shows a compositional bias: basic and acidic residues. Positions 1 to 32 (MADITEKTAEQLENLSLQDKQEGTNEENQSET) are disordered. RRM domains lie at 35 to 113 (ASLY…WSQR), 123 to 200 (GNIF…PHLS), 216 to 293 (TNVY…RAQK), and 319 to 396 (INLF…IAQR). A PABC domain is found at 487 to 566 (GFARNGPAAN…ASAAYESFKQ (80 aa)). Positions 560–579 (AYESFKQEQQQPQGEEAQQA) are disordered. Over residues 566–579 (QEQQQPQGEEAQQA) the composition is skewed to low complexity.

It belongs to the polyadenylate-binding protein type-1 family.

It is found in the cytoplasm. The protein localises to the nucleus. Binds the poly(A) tail of mRNA. Appears to be an important mediator of the multiple roles of the poly(A) tail in mRNA biogenesis, stability and translation. In the nucleus, involved in both mRNA cleavage and polyadenylation. Is also required for efficient mRNA export to the cytoplasm. Acts in concert with a poly(A)-specific nuclease (PAN) to affect poly(A) tail shortening, which may occur concomitantly with either nucleocytoplasmic mRNA transport or translational initiation. In the cytoplasm, stimulates translation initiation and regulates mRNA decay through translation termination-coupled poly(A) shortening, probably mediated by PAN. The sequence is that of Polyadenylate-binding protein, cytoplasmic and nuclear (PAB1) from Candida glabrata (strain ATCC 2001 / BCRC 20586 / JCM 3761 / NBRC 0622 / NRRL Y-65 / CBS 138) (Yeast).